Here is a 141-residue protein sequence, read N- to C-terminus: D-aminoacyl-tRNA deacylase (141 aa).

Positions 133–134 (GP) match the Gly-cisPro motif, important for rejection of L-amino acids motif.

The protein belongs to the DTD family. Homodimer.

The protein localises to the cytoplasm. The catalysed reaction is glycyl-tRNA(Ala) + H2O = tRNA(Ala) + glycine + H(+). The enzyme catalyses a D-aminoacyl-tRNA + H2O = a tRNA + a D-alpha-amino acid + H(+). An aminoacyl-tRNA editing enzyme that deacylates mischarged D-aminoacyl-tRNAs. Also deacylates mischarged glycyl-tRNA(Ala), protecting cells against glycine mischarging by AlaRS. Acts via tRNA-based rather than protein-based catalysis; rejects L-amino acids rather than detecting D-amino acids in the active site. By recycling D-aminoacyl-tRNA to D-amino acids and free tRNA molecules, this enzyme counteracts the toxicity associated with the formation of D-aminoacyl-tRNA entities in vivo and helps enforce protein L-homochirality. The protein is D-aminoacyl-tRNA deacylase of Kineococcus radiotolerans (strain ATCC BAA-149 / DSM 14245 / SRS30216).